A 212-amino-acid polypeptide reads, in one-letter code: Imidazole glycerol phosphate synthase subunit HisH (212 aa).

Residues Lys-2–Val-212 enclose the Glutamine amidotransferase type-1 domain. Residue Cys-82 is the Nucleophile of the active site. Residues His-190 and Glu-192 contribute to the active site.

In terms of assembly, heterodimer of HisH and HisF.

The protein localises to the cytoplasm. It carries out the reaction 5-[(5-phospho-1-deoxy-D-ribulos-1-ylimino)methylamino]-1-(5-phospho-beta-D-ribosyl)imidazole-4-carboxamide + L-glutamine = D-erythro-1-(imidazol-4-yl)glycerol 3-phosphate + 5-amino-1-(5-phospho-beta-D-ribosyl)imidazole-4-carboxamide + L-glutamate + H(+). The enzyme catalyses L-glutamine + H2O = L-glutamate + NH4(+). It functions in the pathway amino-acid biosynthesis; L-histidine biosynthesis; L-histidine from 5-phospho-alpha-D-ribose 1-diphosphate: step 5/9. Its function is as follows. IGPS catalyzes the conversion of PRFAR and glutamine to IGP, AICAR and glutamate. The HisH subunit catalyzes the hydrolysis of glutamine to glutamate and ammonia as part of the synthesis of IGP and AICAR. The resulting ammonia molecule is channeled to the active site of HisF. The protein is Imidazole glycerol phosphate synthase subunit HisH of Chromobacterium violaceum (strain ATCC 12472 / DSM 30191 / JCM 1249 / CCUG 213 / NBRC 12614 / NCIMB 9131 / NCTC 9757 / MK).